The primary structure comprises 540 residues: Intestinal-type alkaline phosphatase 1 (540 aa).

Residues 1 to 20 (MQGDWVLLLLLGLRIHLSFG) form the signal peptide. Residue Asp-62 participates in Mg(2+) binding. Zn(2+) is bound by residues Asp-62 and Ser-112. The active-site Phosphoserine intermediate is Ser-112. A disulfide bridge links Cys-141 with Cys-203. An N-linked (GlcNAc...) asparagine glycan is attached at Asn-142. Ser-175 contacts Mg(2+). Glu-236, Phe-289, and Glu-290 together coordinate Ca(2+). Residue Asn-301 is glycosylated (N-linked (GlcNAc...) asparagine). A Ca(2+)-binding site is contributed by Asp-305. Glu-331 is a binding site for Mg(2+). Positions 336, 340, 377, and 378 each coordinate Zn(2+). N-linked (GlcNAc...) asparagine glycosylation occurs at Asn-428. His-452 contributes to the Zn(2+) binding site. Residues Cys-487 and Cys-494 are joined by a disulfide bond. Asn-511 carries GPI-anchor amidated asparagine lipidation. Residues 512–540 (SAITMNNVLLSLQLLVSMLLLVGTALVVS) constitute a propeptide, removed in mature form.

The protein belongs to the alkaline phosphatase family. In terms of assembly, homodimer. Mg(2+) is required as a cofactor. Requires Zn(2+) as cofactor. Ca(2+) serves as cofactor.

The protein localises to the cell membrane. The enzyme catalyses a phosphate monoester + H2O = an alcohol + phosphate. Functionally, alkaline phosphatase that can hydrolyze various phosphate compounds. In Rattus norvegicus (Rat), this protein is Intestinal-type alkaline phosphatase 1 (Alpi).